The following is a 415-amino-acid chain: Phosphoglycerate kinase (415 aa).

Residues V22, D23, F24, N25, Q37, R38, S61, H62, G64, L120, R121, H168, and R169 each contribute to the (2R)-3-phosphoglycerate site. G212 is a binding site for ADP. G212 contributes to the CDP binding site. AMP contacts are provided by A213 and K214. An ATP-binding site is contributed by A213. A213 serves as a coordination point for Mg(2+). D217 contacts CDP. A Mg(2+)-binding site is contributed by D217. Residue K218 participates in AMP binding. Residue K218 coordinates ATP. G236 is an ADP binding site. G236 contributes to the CDP binding site. Positions 237 and 311 each coordinate AMP. Positions 237 and 311 each coordinate ATP. CDP is bound by residues G336 and F341. ADP is bound at residue F341. E342 provides a ligand contact to AMP. ATP contacts are provided by E342, D373, and T374. D373 is a binding site for Mg(2+).

It belongs to the phosphoglycerate kinase family. In terms of assembly, monomer. Mg(2+) is required as a cofactor.

The protein localises to the cytoplasm. The enzyme catalyses (2R)-3-phosphoglycerate + ATP = (2R)-3-phospho-glyceroyl phosphate + ADP. Its pathway is carbohydrate degradation; glycolysis; pyruvate from D-glyceraldehyde 3-phosphate: step 2/5. The protein is Phosphoglycerate kinase (PGK) of Opisthorchis sinensis (Clonorchis sinensis).